Here is a 49-residue protein sequence, read N- to C-terminus: Large ribosomal subunit protein bL33A (49 aa).

This sequence belongs to the bacterial ribosomal protein bL33 family.

This Staphylococcus haemolyticus (strain JCSC1435) protein is Large ribosomal subunit protein bL33A.